Here is a 515-residue protein sequence, read N- to C-terminus: Maturase K (515 aa).

Belongs to the intron maturase 2 family. MatK subfamily.

It localises to the plastid. Its subcellular location is the chloroplast. Functionally, usually encoded in the trnK tRNA gene intron. Probably assists in splicing its own and other chloroplast group II introns. The chain is Maturase K from Pinus elliottii (Slash pine).